A 243-amino-acid chain; its full sequence is Adenine phosphoribosyltransferase 1, chloroplastic (243 aa).

The N-terminal 52 residues, methionine 1–serine 52, are a transit peptide targeting the chloroplast. At glutamine 2 the chain carries N-acetylalanine.

The protein belongs to the purine/pyrimidine phosphoribosyltransferase family. In terms of assembly, homodimer.

It is found in the plastid. The protein localises to the chloroplast. Its subcellular location is the cytoplasm. It catalyses the reaction AMP + diphosphate = 5-phospho-alpha-D-ribose 1-diphosphate + adenine. It functions in the pathway purine metabolism; AMP biosynthesis via salvage pathway; AMP from adenine: step 1/1. Functionally, catalyzes a salvage reaction resulting in the formation of AMP, that is energically less costly than de novo synthesis. Contributes primarily to the recycling of adenine into adenylate nucleotides, but is also involved in the inactivation of cytokinins by phosphoribosylation. Catalyzes the conversion of cytokinins from free bases (active form) to the corresponding nucleotides (inactive form). This Arabidopsis thaliana (Mouse-ear cress) protein is Adenine phosphoribosyltransferase 1, chloroplastic (APT1).